A 637-amino-acid polypeptide reads, in one-letter code: Protein RRP6-like 1 (637 aa).

In terms of domain architecture, 3'-5' exonuclease spans 118–283; it reads VEEVKDLEDL…YIYDVMRMEL (166 aa). The HRDC domain maps to 334–414; it reads NAVQLSIVAG…RRSMQNAAAF (81 aa). Positions 553 to 565 are enriched in acidic residues; that stretch reads VDDDDDDDDDESY. A disordered region spans residues 553 to 624; sequence VDDDDDDDDD…EDMRRRSEKH (72 aa). Polar residues predominate over residues 580 to 598; the sequence is ETPSKGSPSLTQKPKTCNT. The span at 602-614 shows a compositional bias: acidic residues; sequence VLDDDDDSESRED.

It localises to the nucleus. The protein resides in the nucleoplasm. In terms of biological role, acts as an important epigenetic regulator through multiple silencing mechanisms. Involved in transcriptional gene silencing (TGS). Plays a role for DNA methylation in the RNA-directed DNA methylation (RdDM) pathway. Contributes to the methylation status of the retrotransposon SN1. Required for DNA methylation only at a subset of RdDM target loci. Plays a regulatory role in RdDM through retention of non-coding RNAs (ncRNAs) in normal cells. Helps to retain Pol V-transcribed RNAs in chromatin to enable their scaffold function and is required for genome-wide Pol IV-dependent siRNA (24 nt siRNA) production that may involve retention of Pol IV transcripts. Involved in association with RRP6L2 in the silencing of the solo LTR locus. Controls levels of ncRNAs from the solo LTR locus. Seems to function independently of the RdDM pathway. Functions redundantly with RRP6L2 in the regulation of FLC locus. Participates in the maintenance of trimethylated 'Lys-27' (H3K27me3) at FLC locus via the regulation of antisense long non-coding RNAs (lncRNAs) and the regulation of diverse antisense RNAs derived from the FLC locus. Seems not involved in the exosomal RNA degradation. Can complement the growth defect of a yeast mutant lacking RRP6 exonuclease. This is Protein RRP6-like 1 from Arabidopsis thaliana (Mouse-ear cress).